The primary structure comprises 411 residues: uncharacterized protein (411 aa).

Disordered regions lie at residues 1–91 (METP…QDEE) and 253–280 (KGPLARRNEEDENKPQEKRPRAVTAYSP). The segment covering 46 to 57 (ETTESADSENDM) has biased composition (acidic residues). Positions 74–86 (SNESFSSNQSTES) are enriched in low complexity. Over residues 258-272 (RRNEEDENKPQEKRP) the composition is skewed to basic and acidic residues. Ser279 is modified (phosphoserine).

Widely expressed, highest levels in cerebellum, brain cortex, hippocampus, pons, putamen and amygdala. Highly expressed in neurons, but also present in glial cells. Slightly higher expression in the dorsolateral prefrontal cortex of schizophrenic patients compared to control individuals.

It is found in the cytoplasm. This is an uncharacterized protein from Homo sapiens (Human).